Here is a 156-residue protein sequence, read N- to C-terminus: ATP synthase subunit b (156 aa).

A helical membrane pass occupies residues 3-23 (ITLTIFAQALAFAGLIWIVAT).

The protein belongs to the ATPase B chain family. In terms of assembly, F-type ATPases have 2 components, F(1) - the catalytic core - and F(0) - the membrane proton channel. F(1) has five subunits: alpha(3), beta(3), gamma(1), delta(1), epsilon(1). F(0) has three main subunits: a(1), b(2) and c(10-14). The alpha and beta chains form an alternating ring which encloses part of the gamma chain. F(1) is attached to F(0) by a central stalk formed by the gamma and epsilon chains, while a peripheral stalk is formed by the delta and b chains.

It is found in the cell inner membrane. Its function is as follows. F(1)F(0) ATP synthase produces ATP from ADP in the presence of a proton or sodium gradient. F-type ATPases consist of two structural domains, F(1) containing the extramembraneous catalytic core and F(0) containing the membrane proton channel, linked together by a central stalk and a peripheral stalk. During catalysis, ATP synthesis in the catalytic domain of F(1) is coupled via a rotary mechanism of the central stalk subunits to proton translocation. In terms of biological role, component of the F(0) channel, it forms part of the peripheral stalk, linking F(1) to F(0). The polypeptide is ATP synthase subunit b (Xanthomonas campestris pv. campestris (strain 8004)).